The following is a 154-amino-acid chain: SsrA-binding protein (154 aa).

Belongs to the SmpB family.

It is found in the cytoplasm. Required for rescue of stalled ribosomes mediated by trans-translation. Binds to transfer-messenger RNA (tmRNA), required for stable association of tmRNA with ribosomes. tmRNA and SmpB together mimic tRNA shape, replacing the anticodon stem-loop with SmpB. tmRNA is encoded by the ssrA gene; the 2 termini fold to resemble tRNA(Ala) and it encodes a 'tag peptide', a short internal open reading frame. During trans-translation Ala-aminoacylated tmRNA acts like a tRNA, entering the A-site of stalled ribosomes, displacing the stalled mRNA. The ribosome then switches to translate the ORF on the tmRNA; the nascent peptide is terminated with the 'tag peptide' encoded by the tmRNA and targeted for degradation. The ribosome is freed to recommence translation, which seems to be the essential function of trans-translation. The chain is SsrA-binding protein from Solidesulfovibrio magneticus (strain ATCC 700980 / DSM 13731 / RS-1) (Desulfovibrio magneticus).